A 637-amino-acid polypeptide reads, in one-letter code: ATP-dependent zinc metalloprotease FtsH (637 aa).

The Cytoplasmic segment spans residues 1–44 (MAKHSQHSSPPRKLFDTLNDLWQRAKSEAGLSAEGPEGTRRRNN). Residues 45–65 (LILYLLLVLSTLYLLNGYQTL) traverse the membrane as a helical segment. Over 66–141 (RNEEIPYSEF…TVRYGSNWFS (76 aa)) the chain is Periplasmic. A helical membrane pass occupies residues 142-162 (SLIFNWIVPIVLLTLFWTWMA). Topologically, residues 163 to 637 (RRMTGGRGFL…VKAVIREAAS (475 aa)) are cytoplasmic. 231–238 (GPPGTGKT) provides a ligand contact to ATP. His-454 contacts Zn(2+). Residue Glu-455 is part of the active site. Zn(2+) contacts are provided by His-458 and Asp-531.

In the central section; belongs to the AAA ATPase family. The protein in the C-terminal section; belongs to the peptidase M41 family. Homohexamer. Requires Zn(2+) as cofactor.

Its subcellular location is the cell inner membrane. Acts as a processive, ATP-dependent zinc metallopeptidase for both cytoplasmic and membrane proteins. Plays a role in the quality control of integral membrane proteins. This is ATP-dependent zinc metalloprotease FtsH from Methylococcus capsulatus (strain ATCC 33009 / NCIMB 11132 / Bath).